Consider the following 379-residue polypeptide: ATP-sensitive inward rectifier potassium channel 10 (379 aa).

The Cytoplasmic portion of the chain corresponds to 1–61; sequence MTSVAKVYYS…LKDLWTTFID (61 aa). Arginine 36 lines the 1,2-dioctanoyl-sn-glycero-3-phospho-(1D-myo-inositol-4,5-bisphosphate) pocket. The helical transmembrane segment at 62–88 threads the bilayer; sequence MQWRYKLLLFSATFAGTWFLFGVVWYL. At 89–114 the chain is on the extracellular side; the sequence is VAVAHGDLLELGPPANHTPCVVQVHT. A disulfide bridge links cysteine 108 with cysteine 140. The segment at residues 115–131 is an intramembrane region (discontinuously helical; Pore-forming); that stretch reads LTGAFLFSLESQTTIGY. The Selectivity filter signature appears at 128 to 133; the sequence is TIGYGF. Topologically, residues 132–140 are extracellular; that stretch reads GFRYISEEC. The chain crosses the membrane as a helical span at residues 141–166; it reads PLAIVLLIAQLVLTTILEIFITGTFL. The Cytoplasmic segment spans residues 167–379; that stretch reads AKIARPKKRA…SALSVRISNV (213 aa). 1,2-dioctanoyl-sn-glycero-3-phospho-(1D-myo-inositol-4,5-bisphosphate) contacts are provided by lysine 168, arginine 171, and lysine 173. 210 to 217 is a binding site for ATP; that stretch reads GCQVTGKL.

It belongs to the inward rectifier-type potassium channel (TC 1.A.2.1) family. KCNJ10 subfamily. In terms of assembly, homotetramer. In kidney cells, it forms heteromeric channels with Kir5.1/KCNJ16; this interaction is required for KCNJ16 localization to the basolateral membrane. Interacts with MAGI1, alone and possibly as a heteromer with KCNJ16; this interaction may facilitate KCNJ10/KCNJ16 potassium channel expression at the basolateral membrane in kidney cells. Interacts with PATJ. Widely expressed in adult brain, including in the neocortex, the stratum pyrimadale of the hippocampus and the piriform cortex. Expressed by cultured astrocytes and also by cocultured cortical neurons (at protein level). In the distal segment of the nephron, expressed in the distal convoluted tubule, the connecting tubule, and the early cortical collecting duct.

It localises to the membrane. It is found in the basolateral cell membrane. It carries out the reaction K(+)(in) = K(+)(out). With respect to regulation, channel activity is strongly regulated by variations of cytosolic pH; channels are activated by alkaline and inhibited by acidic pH values. Activated by phosphatidylinositol 4,5 biphosphate (PtdIns(4,5)P2). Inhibited by Ba(2+) and Cs(+). In terms of biological role, may be responsible for potassium buffering action of glial cells in the brain. Inward rectifier potassium channels are characterized by a greater tendency to allow potassium to flow into the cell rather than out of it. Their voltage dependence is regulated by the concentration of extracellular potassium; as external potassium is raised, the voltage range of the channel opening shifts to more positive voltages. The inward rectification is mainly due to the blockage of outward current by internal magnesium. Can be blocked by extracellular barium and cesium. In the kidney, together with KCNJ16, mediates basolateral K(+) recycling in distal tubules; this process is critical for Na(+) reabsorption at the tubules. This is ATP-sensitive inward rectifier potassium channel 10 from Mus musculus (Mouse).